The sequence spans 187 residues: Peptide deformylase (187 aa).

Cysteine 107 and histidine 149 together coordinate Fe cation. The active site involves glutamate 150. Position 153 (histidine 153) interacts with Fe cation.

It belongs to the polypeptide deformylase family. Fe(2+) is required as a cofactor.

The catalysed reaction is N-terminal N-formyl-L-methionyl-[peptide] + H2O = N-terminal L-methionyl-[peptide] + formate. Removes the formyl group from the N-terminal Met of newly synthesized proteins. Requires at least a dipeptide for an efficient rate of reaction. N-terminal L-methionine is a prerequisite for activity but the enzyme has broad specificity at other positions. The chain is Peptide deformylase from Synechocystis sp. (strain ATCC 27184 / PCC 6803 / Kazusa).